The following is a 125-amino-acid chain: uncharacterized protein (125 aa).

The protein localises to the plastid. Its subcellular location is the chloroplast. This is an uncharacterized protein from Guillardia theta (Cryptophyte).